We begin with the raw amino-acid sequence, 275 residues long: Rhamnulose-1-phosphate aldolase (275 aa).

Glu117 is an active-site residue. Zn(2+) is bound by residues His141, His143, and His212.

The protein belongs to the aldolase class II family. RhaD subfamily. Homotetramer. Zn(2+) serves as cofactor.

Its subcellular location is the cytoplasm. The enzyme catalyses L-rhamnulose 1-phosphate = (S)-lactaldehyde + dihydroxyacetone phosphate. The protein operates within carbohydrate degradation; L-rhamnose degradation; glycerone phosphate from L-rhamnose: step 3/3. Catalyzes the reversible cleavage of L-rhamnulose-1-phosphate to dihydroxyacetone phosphate (DHAP) and L-lactaldehyde. The protein is Rhamnulose-1-phosphate aldolase of Salmonella heidelberg (strain SL476).